The following is a 257-amino-acid chain: Phycoerythrobilin:ferredoxin oxidoreductase (257 aa).

Belongs to the HY2 family.

The enzyme catalyses (3Z)-phycoerythrobilin + oxidized 2[4Fe-4S]-[ferredoxin] = 15,16-dihydrobiliverdin + reduced 2[4Fe-4S]-[ferredoxin] + 2 H(+). In terms of biological role, catalyzes the two-electron reduction of the C2 and C3(1) diene system of 15,16-dihydrobiliverdin. The polypeptide is Phycoerythrobilin:ferredoxin oxidoreductase (Prochlorococcus marinus (strain MIT 9211)).